The sequence spans 188 residues: Small ribosomal subunit protein bS16 (188 aa).

Positions 155–188 (IAAASATEEAATEEVAEAAEEAPAAEENNETTEA) are disordered. Residues 164 to 188 (AATEEVAEAAEEAPAAEENNETTEA) show a composition bias toward acidic residues.

It belongs to the bacterial ribosomal protein bS16 family.

The sequence is that of Small ribosomal subunit protein bS16 from Flavobacterium johnsoniae (strain ATCC 17061 / DSM 2064 / JCM 8514 / BCRC 14874 / CCUG 350202 / NBRC 14942 / NCIMB 11054 / UW101) (Cytophaga johnsonae).